Consider the following 229-residue polypeptide: Zinc finger matrin-type protein 4 (229 aa).

4 consecutive Matrin-type zinc fingers follow at residues 14–44 (SYCK…KVRL), 72–106 (DKNK…LKLL), 145–175 (RYCG…NAAR), and 198–228 (YRCT…NLKN).

It localises to the nucleus. The polypeptide is Zinc finger matrin-type protein 4 (Zmat4) (Mus musculus (Mouse)).